We begin with the raw amino-acid sequence, 418 residues long: Serine hydroxymethyltransferase (418 aa).

(6S)-5,6,7,8-tetrahydrofolate-binding positions include leucine 121 and 125-127 (GHL). At lysine 230 the chain carries N6-(pyridoxal phosphate)lysine. Residue 356 to 358 (SPF) participates in (6S)-5,6,7,8-tetrahydrofolate binding.

Belongs to the SHMT family. Homodimer. It depends on pyridoxal 5'-phosphate as a cofactor.

It is found in the cytoplasm. The catalysed reaction is (6R)-5,10-methylene-5,6,7,8-tetrahydrofolate + glycine + H2O = (6S)-5,6,7,8-tetrahydrofolate + L-serine. Its pathway is one-carbon metabolism; tetrahydrofolate interconversion. The protein operates within amino-acid biosynthesis; glycine biosynthesis; glycine from L-serine: step 1/1. Functionally, catalyzes the reversible interconversion of serine and glycine with tetrahydrofolate (THF) serving as the one-carbon carrier. This reaction serves as the major source of one-carbon groups required for the biosynthesis of purines, thymidylate, methionine, and other important biomolecules. Also exhibits THF-independent aldolase activity toward beta-hydroxyamino acids, producing glycine and aldehydes, via a retro-aldol mechanism. The chain is Serine hydroxymethyltransferase from Shewanella sediminis (strain HAW-EB3).